We begin with the raw amino-acid sequence, 292 residues long: ATP synthase gamma chain (292 aa).

It belongs to the ATPase gamma chain family. As to quaternary structure, F-type ATPases have 2 components, CF(1) - the catalytic core - and CF(0) - the membrane proton channel. CF(1) has five subunits: alpha(3), beta(3), gamma(1), delta(1), epsilon(1). CF(0) has three main subunits: a, b and c.

Its subcellular location is the cell membrane. Its function is as follows. Produces ATP from ADP in the presence of a proton gradient across the membrane. The gamma chain is believed to be important in regulating ATPase activity and the flow of protons through the CF(0) complex. This Streptococcus mutans serotype c (strain ATCC 700610 / UA159) protein is ATP synthase gamma chain.